A 47-amino-acid polypeptide reads, in one-letter code: Large ribosomal subunit protein bL34 (47 aa).

The protein belongs to the bacterial ribosomal protein bL34 family.

This Mycolicibacterium vanbaalenii (strain DSM 7251 / JCM 13017 / BCRC 16820 / KCTC 9966 / NRRL B-24157 / PYR-1) (Mycobacterium vanbaalenii) protein is Large ribosomal subunit protein bL34.